Reading from the N-terminus, the 518-residue chain is Prosaposin (518 aa).

The signal sequence occupies residues 1–17 (MARRLLTLLGLLAAAVA). Positions 18-60 (SPVLWQKDCAKGPEVWCQSLRTASQCGAVKHCQQNVWSKPAVN) are excised as a propeptide. The region spanning 19–59 (PVLWQKDCAKGPEVWCQSLRTASQCGAVKHCQQNVWSKPAV) is the Saposin A-type 1 domain. Saposin B-type domains follow at residues 60–143 (NSIP…QSLQ), 193–277 (TEDV…PSVK), 307–388 (TFSV…AANK), and 399–480 (AGGF…GAAK). Cystine bridges form between Cys64-Cys139, Cys67-Cys133, and Cys95-Cys107. An N-linked (GlcNAc...) asparagine glycan is attached at Asn81. The propeptide occupies 144-193 (KHLAAMKLQKQLQSNKIPELDFSELTSPFMANVPLLLYPQDKPKQKSKAT). Cystine bridges form between Cys197–Cys273, Cys200–Cys267, and Cys229–Cys240. A glycan (N-linked (GlcNAc...) asparagine) is linked at Asn214. A propeptide spanning residues 277–306 (KSVPLQTLVPAQVVHEVKMETVEKATVQEK) is cleaved from the precursor. 3 disulfide bridges follow: Cys311/Cys384, Cys314/Cys378, and Cys342/Cys353. N-linked (GlcNAc...) asparagine glycosylation is present at Asn328. Residues 388 to 398 (KPPQQPVVVKP) constitute a propeptide that is removed on maturation. Cystine bridges form between Cys403–Cys476, Cys406–Cys470, and Cys434–Cys445. Asn420 carries N-linked (GlcNAc...) asparagine glycosylation. A propeptide spanning residues 480–518 (KKPLLGEDACVWGPGYWCKNMETAAQCNAVDHCRRHVWN) is cleaved from the precursor. In terms of domain architecture, Saposin A-type 2 spans 482 to 518 (PLLGEDACVWGPGYWCKNMETAAQCNAVDHCRRHVWN).

Saposin-B is a homodimer. This precursor is proteolytically processed to 4 small peptides, which are similar to each other and are sphingolipid hydrolase activator proteins.

The protein resides in the lysosome. It is found in the secreted. The lysosomal degradation of sphingolipids takes place by the sequential action of specific hydrolases. Some of these enzymes require specific low-molecular mass, non-enzymatic proteins: the sphingolipids activator proteins (coproteins). In terms of biological role, saposin-A and saposin-C stimulate the hydrolysis of glucosylceramide by beta-glucosylceramidase (EC 3.2.1.45) and galactosylceramide by beta-galactosylceramidase (EC 3.2.1.46). Saposin-C apparently acts by combining with the enzyme and acidic lipid to form an activated complex, rather than by solubilizing the substrate. Its function is as follows. Saposin-B stimulates the hydrolysis of galacto-cerebroside sulfate by arylsulfatase A (EC 3.1.6.8), GM1 gangliosides by beta-galactosidase (EC 3.2.1.23) and globotriaosylceramide by alpha-galactosidase A (EC 3.2.1.22). Saposin-B forms a solubilizing complex with the substrates of the sphingolipid hydrolases. Functionally, saposin-D is a specific sphingomyelin phosphodiesterase activator (EC 3.1.4.12). This Gallus gallus (Chicken) protein is Prosaposin (PSAP).